The primary structure comprises 244 residues: ATP-dependent dethiobiotin synthetase BioD 1 (244 aa).

Position 12-17 (12-17 (NVGKTV)) interacts with ATP. Thr-16 is a Mg(2+) binding site. Lys-37 is an active-site residue. Residue Asp-68 participates in ATP binding. Positions 68 and 126 each coordinate Mg(2+). ATP is bound by residues 186-187 (NR), 215-217 (PYL), and Glu-222.

The protein belongs to the dethiobiotin synthetase family. Homodimer. The cofactor is Mg(2+).

The protein localises to the cytoplasm. It catalyses the reaction (7R,8S)-7,8-diammoniononanoate + CO2 + ATP = (4R,5S)-dethiobiotin + ADP + phosphate + 3 H(+). The protein operates within cofactor biosynthesis; biotin biosynthesis; biotin from 7,8-diaminononanoate: step 1/2. Functionally, catalyzes a mechanistically unusual reaction, the ATP-dependent insertion of CO2 between the N7 and N8 nitrogen atoms of 7,8-diaminopelargonic acid (DAPA, also called 7,8-diammoniononanoate) to form a ureido ring. This Pasteurella multocida (strain Pm70) protein is ATP-dependent dethiobiotin synthetase BioD 1.